A 515-amino-acid polypeptide reads, in one-letter code: Histidine ammonia-lyase (515 aa).

A cross-link (5-imidazolinone (Ala-Gly)) is located at residues 145 to 147 (ASG). Residue serine 146 is modified to 2,3-didehydroalanine (Ser).

This sequence belongs to the PAL/histidase family. In terms of processing, contains an active site 4-methylidene-imidazol-5-one (MIO), which is formed autocatalytically by cyclization and dehydration of residues Ala-Ser-Gly.

It localises to the cytoplasm. It catalyses the reaction L-histidine = trans-urocanate + NH4(+). Its pathway is amino-acid degradation; L-histidine degradation into L-glutamate; N-formimidoyl-L-glutamate from L-histidine: step 1/3. The polypeptide is Histidine ammonia-lyase (Gluconacetobacter diazotrophicus (strain ATCC 49037 / DSM 5601 / CCUG 37298 / CIP 103539 / LMG 7603 / PAl5)).